Here is a 2554-residue protein sequence, read N- to C-terminus: Highly reducing polyketide synthase PKS6 (2554 aa).

Residues 1-48 form a disordered region; sequence MGSLSAVPATNGNHAALNGSASTNGQHVNGSTHVNGNHSLNGSAQVNG. The span at 8–48 shows a compositional bias: polar residues; sequence PATNGNHAALNGSASTNGQHVNGSTHVNGNHSLNGSAQVNG. The 426-residue stretch at 56 to 481 folds into the Ketosynthase family 3 (KS3) domain; it reads LEPIAVVGMS…GTNAHVVVDA (426 aa). Active-site for beta-ketoacyl synthase activity residues include Cys-230, His-367, and His-407. The malonyl-CoA:ACP transacylase (MAT) domain stretch occupies residues 595–913; it reads VFSGQGAQYP…HYTGSLKRGE (319 aa). Residues 981–1119 are N-terminal hotdog fold; the sequence is HELLGTLVHD…GLVQVILKSE (139 aa). The segment at 981–1281 is dehydratase (DH) domain; it reads HELLGTLVHD…QAWGVVATKL (301 aa). Residues 981–1287 enclose the PKS/mFAS DH domain; it reads HELLGTLVHD…ATKLPDVSIG (307 aa). The active-site Proton acceptor; for dehydratase activity is His-1013. Positions 1137–1287 are C-terminal hotdog fold; it reads AQHIPANQFY…ATKLPDVSIG (151 aa). Asp-1200 (proton donor; for dehydratase activity) is an active-site residue. Residues 1451-1556 are methyltransferase (CMet) domain; sequence VEVGAGTGSA…KTMLRPGGKL (106 aa). An enoyl reductase (ER) domain region spans residues 1840-2153; that stretch reads GVLDTIRWVD…AGKHTGKVIL (314 aa). The tract at residues 2177–2353 is ketoreductase (KR) domain; the sequence is ATYLVVGGLG…TAYAVNIGAI (177 aa). In terms of domain architecture, Carrier spans 2457-2534; the sequence is EAQDIICDAI…ELAEIVTKGS (78 aa). Ser-2494 bears the O-(pantetheine 4'-phosphoryl)serine mark.

Its pathway is secondary metabolite biosynthesis. Its function is as follows. Highly reducing polyketide synthase; part of the gene cluster that mediates the biosynthesis of the lipopeptide fusaristatin A. Fusaristatin A consists of a polyketide chain linked to three amino acid residues glutamine (Gln), dehydroalanine (dehydro-Ala), and beta-aminoisobutyric acid. The biosynthesis starts with formation of a linear polyketide chain by the highly reducing polyketide synthase PKS6. The gene cluster does not contain an acyl-CoA ligase or an acyl-transferase, and it is therefore predicted that the polyketide is transferred directly to the nonribosomal peptide synthetase NRPS7. Modules 1-3 from NRPS7 incorporate dehydro-Ala, Gln, and beta-aminoisobutyric acid in the compound, which is released by cyclization. The beta-aminoisobutyric acid units are most likely not freely available to the NRPS, but can be synthesized from thymine, which requires a dehydrogenase, a monooxygenase, and an aminotransferase. The fusaristatin A cluster contains a cytochrome P450 monooxygenase (FGSG_08207) and an aminotransferase (FGSG_17085), which theoretically can perform two of the enzymatic steps. The enzymes may however also be involved in biosynthesis of dehydroalanine or modification of the polyketide. The dehydro-Ala residue can be a result of cyclization, where serine is dehydrated. The last gene of the cluster encodes a protein with an A/B barrel domain found in variable enzymes, which hampers functional prediction. This Gibberella zeae (strain ATCC MYA-4620 / CBS 123657 / FGSC 9075 / NRRL 31084 / PH-1) (Wheat head blight fungus) protein is Highly reducing polyketide synthase PKS6.